The sequence spans 430 residues: tRNA(Ile)-lysidine synthase (430 aa).

27-32 (SGGSDS) contributes to the ATP binding site.

It belongs to the tRNA(Ile)-lysidine synthase family.

The protein resides in the cytoplasm. It catalyses the reaction cytidine(34) in tRNA(Ile2) + L-lysine + ATP = lysidine(34) in tRNA(Ile2) + AMP + diphosphate + H(+). Ligates lysine onto the cytidine present at position 34 of the AUA codon-specific tRNA(Ile) that contains the anticodon CAU, in an ATP-dependent manner. Cytidine is converted to lysidine, thus changing the amino acid specificity of the tRNA from methionine to isoleucine. The polypeptide is tRNA(Ile)-lysidine synthase (Rickettsia felis (strain ATCC VR-1525 / URRWXCal2) (Rickettsia azadi)).